The chain runs to 45 residues: Temporin-SHf (45 aa).

The first 10 residues, 1-10 (FLGTINLSLC), serve as a signal peptide directing secretion. The propeptide occupies 11–35 (EEERDADEEERRDEPDESNVEVKKR). Phe43 is subject to Phenylalanine amide.

The protein belongs to the frog skin active peptide (FSAP) family. Temporin subfamily.

It is found in the secreted. The protein resides in the target cell membrane. Non-amphipathic alpha-helical antimicrobial peptide with potent activity against some Gram-positive bacteria (including methicillin-resistant Staphylococcus aureus (MRSA)), weak activity against Gram-negative bacteria and no activity against fungi. Permeabilizates membranes through a detergent-like effect probably via the carpet mechanism. More precisely, it strongly and selectively perturbs anionic bilayers membranes by interacting with the polar headgroups and the glycerol backbone region of the phospholipids, hence disrupting the acyl chain packing of the bilayer. Is not active against Leishmania (promastigote and axenic amastigote forms). Does not show hemolytic activity. Does not show toxicity for human THP-1-derived macrophages. The chain is Temporin-SHf from Pelophylax saharicus (Sahara frog).